A 160-amino-acid polypeptide reads, in one-letter code: Cytochrome b6-f complex subunit 4 (160 aa).

Transmembrane regions (helical) follow at residues 36-56, 95-115, and 131-151; these read LLYMFPVVIFGSFACVIGLAV, LLGVLLMAAVPAGLLTVPFIE, and TVFLIGTFAAIWLGIGACLPI.

The protein belongs to the cytochrome b family. PetD subfamily. As to quaternary structure, the 4 large subunits of the cytochrome b6-f complex are cytochrome b6, subunit IV (17 kDa polypeptide, petD), cytochrome f and the Rieske protein, while the 4 small subunits are petG, petL, petM and petN. The complex functions as a dimer.

Its subcellular location is the plastid. It is found in the chloroplast thylakoid membrane. Its function is as follows. Component of the cytochrome b6-f complex, which mediates electron transfer between photosystem II (PSII) and photosystem I (PSI), cyclic electron flow around PSI, and state transitions. This chain is Cytochrome b6-f complex subunit 4, found in Tupiella akineta (Green alga).